The following is a 151-amino-acid chain: Tetratricopeptide repeat protein 32 (151 aa).

3 TPR repeats span residues S8–A41, A58–F91, and E92–F125.

In Homo sapiens (Human), this protein is Tetratricopeptide repeat protein 32 (TTC32).